The primary structure comprises 200 residues: Probable GTP-binding protein EngB (200 aa).

One can recognise an EngB-type G domain in the interval 26-200 (SIPEVALAGR…IYEIAQCIKK (175 aa)). Residues 34–41 (GRSNVGKS), 61–65 (GCTRQ), 80–83 (DLPG), 147–150 (TKID), and 179–181 (VSS) contribute to the GTP site. Residues Ser-41 and Thr-63 each coordinate Mg(2+).

This sequence belongs to the TRAFAC class TrmE-Era-EngA-EngB-Septin-like GTPase superfamily. EngB GTPase family. Requires Mg(2+) as cofactor.

Its function is as follows. Necessary for normal cell division and for the maintenance of normal septation. This chain is Probable GTP-binding protein EngB, found in Ehrlichia ruminantium (strain Welgevonden).